The chain runs to 488 residues: Probable cytochrome P450 6u1 (488 aa).

Cysteine 430 is a heme binding site.

This sequence belongs to the cytochrome P450 family. It depends on heme as a cofactor.

Its subcellular location is the endoplasmic reticulum membrane. It localises to the microsome membrane. In terms of biological role, may be involved in the metabolism of insect hormones and in the breakdown of synthetic insecticides. The polypeptide is Probable cytochrome P450 6u1 (Cyp6u1) (Drosophila melanogaster (Fruit fly)).